Reading from the N-terminus, the 2211-residue chain is Orsellinic acid synthase (2211 aa).

Residues 44–246 (TFREQVSDAI…TVAVVHSLYH (203 aa)) form an N-terminal acylcarrier protein transacylase domain (SAT) region. One can recognise a Ketosynthase family 3 (KS3) domain in the interval 380 to 805 (WDDIAIVGMA…GSNAAVIIGE (426 aa)). Active-site for beta-ketoacyl synthase activity residues include C549, H684, and H724. Positions 910–1228 (VFIFSGQGSQ…QLTTLKKNVP (319 aa)) are malonyl-CoA:ACP transacylase (MAT) domain. The active-site For acyl/malonyl transferase activity is S1006. Residues 1309–1440 (HAIQKLSHGA…GVVKQSNMAS (132 aa)) form an N-terminal hotdog fold region. In terms of domain architecture, PKS/mFAS DH spans 1309 to 1629 (HAIQKLSHGA…FQHVKIPLIE (321 aa)). The tract at residues 1334–1573 (EFIEGHLVCG…GATTLRAPVV (240 aa)) is product template (PT) domain. The active-site Proton acceptor; for dehydratase activity is H1339. Residues 1473 to 1629 (VQVFSKRAMY…FQHVKIPLIE (157 aa)) form a C-terminal hotdog fold region. The active-site Proton donor; for dehydratase activity is D1537. Carrier domains lie at 1681–1755 (AAPE…EALS) and 1787–1865 (STVD…VKRP). S1715 carries the O-(pantetheine 4'-phosphoryl)serine modification. The interval 1755–1786 (SPTPVGNDVDNDSPTPGSERGSDSAISTPASV) is disordered. S1824 bears the O-(pantetheine 4'-phosphoryl)serine mark. Residues 1937–2204 (SGKSPLFLIH…AAVSAALVDA (268 aa)) are thioesterase (TE) domain.

The catalysed reaction is 3 malonyl-CoA + acetyl-CoA + 2 H(+) = orsellinate + 3 CO2 + 4 CoA. It functions in the pathway secondary metabolite biosynthesis. Its function is as follows. Non-reducing polyketide synthase; part of the gene cluster that mediates the biosynthesis of the bibenzoquinone oosporein, a metabolite required for fungal virulence that acts by evading host immunity to facilitate fungal multiplication in insects. The non-reducing polyketide synthase OpS1 produces orsellinic acid by condensing acetyl-CoA with 3 malonyl-CoA units. Orsellinic acid is then hydroxylated to benzenetriol by the hydroxylase OpS4. The intermediate is oxidized either nonenzymatically to 5,5'-dideoxy-oosporein or enzymatically to benzenetetrol by the oxidoreductase OpS7. The latter is further dimerized to oosporein by the catalase OpS5. OpS6 probably functions en route for protecting cells against oxidative stress by scavenging any leaked free radical form of benzenetetrol by activating the thiol group of glutathione. In Beauveria bassiana (strain ARSEF 2860) (White muscardine disease fungus), this protein is Orsellinic acid synthase.